Consider the following 382-residue polypeptide: DnaJ homolog dnj-20 (382 aa).

The first 21 residues, 1 to 21 (MRILNVSLLVLTAFLVDFVEC), serve as a signal peptide directing secretion. The J domain maps to 24 to 89 (DFYKILGVSK…EKRAMYDRHG (66 aa)).

This chain is DnaJ homolog dnj-20, found in Caenorhabditis briggsae.